A 284-amino-acid polypeptide reads, in one-letter code: ATP phosphoribosyltransferase (284 aa).

It belongs to the ATP phosphoribosyltransferase family. Long subfamily. Mg(2+) is required as a cofactor.

The protein resides in the cytoplasm. The catalysed reaction is 1-(5-phospho-beta-D-ribosyl)-ATP + diphosphate = 5-phospho-alpha-D-ribose 1-diphosphate + ATP. Its pathway is amino-acid biosynthesis; L-histidine biosynthesis; L-histidine from 5-phospho-alpha-D-ribose 1-diphosphate: step 1/9. Its activity is regulated as follows. Feedback inhibited by histidine. Catalyzes the condensation of ATP and 5-phosphoribose 1-diphosphate to form N'-(5'-phosphoribosyl)-ATP (PR-ATP). Has a crucial role in the pathway because the rate of histidine biosynthesis seems to be controlled primarily by regulation of HisG enzymatic activity. The protein is ATP phosphoribosyltransferase of Corynebacterium kroppenstedtii (strain DSM 44385 / JCM 11950 / CIP 105744 / CCUG 35717).